The primary structure comprises 568 residues: bZIP transcription factor 60 (568 aa).

2 stretches are compositionally biased toward low complexity: residues 1–13 (MAEP…FADL) and 60–78 (TTSS…TSSA). Disordered regions lie at residues 1–29 (MAEP…TLGD) and 45–134 (DFDV…RKKQ). At 1–240 (MAEPDLLAPF…PAKKARKTKK (240 aa)) the chain is on the cytoplasmic side. The segment covering 103–113 (GGKDGKDDEAK) has biased composition (basic and acidic residues). The region spanning 111 to 171 (EAKRRARLVR…AENAALKQQL (61 aa)) is the bZIP domain. The tract at residues 113 to 144 (KRRARLVRNRESAHQSRQRKKQYVEELEGKVK) is basic motif. Positions 150 to 157 (IADLTARI) are leucine-zipper. Residues 241 to 261 (VAGVSLLGLLFLMMVCGCLVP) form a helical membrane-spanning segment. Over 262–568 (AVNRMYGAAY…LPFKSHSPHL (307 aa)) the chain is Lumenal. 5 N-linked (GlcNAc...) asparagine glycosylation sites follow: asparagine 307, asparagine 452, asparagine 456, asparagine 488, and asparagine 499. The segment at 479–510 (AIPLRGSTSNDTDHFKAPPKNHSQSHAGRKPV) is disordered.

Belongs to the bZIP family.

It localises to the endoplasmic reticulum membrane. It is found in the nucleus. Its function is as follows. Transcription factor involved in endoplasmic reticulum (ER) stress response. Acts as a ER stress sensor and activates the transcription factor BZIP50 and the chaperone BIP1. This is bZIP transcription factor 60 from Oryza sativa subsp. japonica (Rice).